The following is a 170-amino-acid chain: Crossover junction endodeoxyribonuclease RuvC (170 aa).

Catalysis depends on residues Asp9, Glu70, and Asp145. Mg(2+)-binding residues include Asp9, Glu70, and Asp145.

Belongs to the RuvC family. Homodimer which binds Holliday junction (HJ) DNA. The HJ becomes 2-fold symmetrical on binding to RuvC with unstacked arms; it has a different conformation from HJ DNA in complex with RuvA. In the full resolvosome a probable DNA-RuvA(4)-RuvB(12)-RuvC(2) complex forms which resolves the HJ. Mg(2+) serves as cofactor.

It is found in the cytoplasm. It carries out the reaction Endonucleolytic cleavage at a junction such as a reciprocal single-stranded crossover between two homologous DNA duplexes (Holliday junction).. In terms of biological role, the RuvA-RuvB-RuvC complex processes Holliday junction (HJ) DNA during genetic recombination and DNA repair. Endonuclease that resolves HJ intermediates. Cleaves cruciform DNA by making single-stranded nicks across the HJ at symmetrical positions within the homologous arms, yielding a 5'-phosphate and a 3'-hydroxyl group; requires a central core of homology in the junction. The consensus cleavage sequence is 5'-(A/T)TT(C/G)-3'. Cleavage occurs on the 3'-side of the TT dinucleotide at the point of strand exchange. HJ branch migration catalyzed by RuvA-RuvB allows RuvC to scan DNA until it finds its consensus sequence, where it cleaves and resolves the cruciform DNA. The protein is Crossover junction endodeoxyribonuclease RuvC of Chlamydia trachomatis serovar A (strain ATCC VR-571B / DSM 19440 / HAR-13).